The chain runs to 412 residues: Fringe glycosyltransferase (412 aa).

Topologically, residues 1–15 are cytoplasmic; it reads MMSLTVLSPPQRFKR. The chain crosses the membrane as a helical; Signal-anchor for type II membrane protein span at residues 16-34; the sequence is ILQAMMLAVAVVYMTLLLY. Over 35-412 the chain is Lumenal; the sequence is QSAYGYPGIQ…FPYFSFCPPR (378 aa). Substrate is bound at residue R164. Cystine bridges form between C204/C215 and C233/C297. D237 serves as a coordination point for substrate. Residue D238 coordinates Mn(2+). The active site involves D327. A Mn(2+)-binding site is contributed by H351. A disulfide bridge links C400 with C409.

Belongs to the glycosyltransferase 31 family. The cofactor is Mn(2+). As to expression, expressed in dorsal cells.

The protein resides in the golgi apparatus membrane. The enzyme catalyses 3-O-(alpha-L-fucosyl)-L-threonyl-[EGF-like domain protein] + UDP-N-acetyl-alpha-D-glucosamine = 3-O-(N-acetyl-beta-D-glucosaminyl-(1-&gt;3)-alpha-L-fucosyl)-L-threonyl-[EGF-like domain protein] + UDP + H(+). It catalyses the reaction 3-O-(alpha-L-fucosyl)-L-seryl-[EGF-like domain protein] + UDP-N-acetyl-alpha-D-glucosamine = 3-O-(N-acetyl-beta-D-glucosaminyl-(1-&gt;3)-alpha-L-fucosyl)-L-seryl-[EGF-like domain protein] + UDP + H(+). Glycosyltransferase involved in the elongation of O-linked ligands to activate Notch signaling. Possesses fucose-specific beta-1,3-N-acetylglucosaminyltransferase activity; extends the O-linked fucose on the Notch EGF repeats. Boundary-specific cell-signaling molecule that is responsible for dorsal-ventral cell interactions during wing development. The chain is Fringe glycosyltransferase (fng) from Drosophila melanogaster (Fruit fly).